The chain runs to 132 residues: Small ribosomal subunit protein eS6 (132 aa).

It belongs to the eukaryotic ribosomal protein eS6 family.

The polypeptide is Small ribosomal subunit protein eS6 (Methanoculleus marisnigri (strain ATCC 35101 / DSM 1498 / JR1)).